The sequence spans 276 residues: Rhomboid protease GlpG (276 aa).

The next 6 helical transmembrane spans lie at 94–114 (GPVT…MSLI), 142–162 (IFMH…WYLG), 169–189 (LGSG…GYVQ), 192–212 (FSGP…GYVW), 229–249 (LIIF…GMSM), and 250–270 (ANGA…VDTL). S201 functions as the Nucleophile in the catalytic mechanism. H254 is a catalytic residue.

It belongs to the peptidase S54 family.

The protein localises to the cell inner membrane. The enzyme catalyses Cleaves type-1 transmembrane domains using a catalytic dyad composed of serine and histidine that are contributed by different transmembrane domains.. Functionally, rhomboid-type serine protease that catalyzes intramembrane proteolysis. The protein is Rhomboid protease GlpG of Salmonella choleraesuis (strain SC-B67).